Reading from the N-terminus, the 255-residue chain is Type III pantothenate kinase (255 aa).

6-13 (DIGNSNID) contacts ATP. 107–110 (GADL) lines the substrate pocket. Catalysis depends on Asp109, which acts as the Proton acceptor. Asp129 is a binding site for K(+). Residue Thr132 participates in ATP binding. Thr183 is a substrate binding site.

This sequence belongs to the type III pantothenate kinase family. As to quaternary structure, homodimer. Requires NH4(+) as cofactor. The cofactor is K(+).

The protein localises to the cytoplasm. It catalyses the reaction (R)-pantothenate + ATP = (R)-4'-phosphopantothenate + ADP + H(+). Its pathway is cofactor biosynthesis; coenzyme A biosynthesis; CoA from (R)-pantothenate: step 1/5. Catalyzes the phosphorylation of pantothenate (Pan), the first step in CoA biosynthesis. This chain is Type III pantothenate kinase, found in Dictyoglomus turgidum (strain DSM 6724 / Z-1310).